Reading from the N-terminus, the 444-residue chain is Glutamate--tRNA ligase (444 aa).

The 'HIGH' region signature appears at 12–22 (PSPTGFLHVGG). The short motif at 213–217 (KMSKR) is the 'KMSKS' region element. An ATP-binding site is contributed by Lys-216.

The protein belongs to the class-I aminoacyl-tRNA synthetase family. Glutamate--tRNA ligase type 1 subfamily. In terms of assembly, monomer.

The protein resides in the cytoplasm. The enzyme catalyses tRNA(Glu) + L-glutamate + ATP = L-glutamyl-tRNA(Glu) + AMP + diphosphate. Functionally, catalyzes the attachment of glutamate to tRNA(Glu) in a two-step reaction: glutamate is first activated by ATP to form Glu-AMP and then transferred to the acceptor end of tRNA(Glu). This is Glutamate--tRNA ligase from Methylacidiphilum infernorum (isolate V4) (Methylokorus infernorum (strain V4)).